The primary structure comprises 251 residues: LexA repressor (251 aa).

The segment at residues 26–46 is a DNA-binding region (H-T-H motif); sequence FDEMKDALGLKSKSGIHRLIK. Residues S172 and K210 each act as for autocatalytic cleavage activity in the active site.

The protein belongs to the peptidase S24 family. In terms of assembly, homodimer.

It carries out the reaction Hydrolysis of Ala-|-Gly bond in repressor LexA.. Represses a number of genes involved in the response to DNA damage (SOS response), including recA and lexA. In the presence of single-stranded DNA, RecA interacts with LexA causing an autocatalytic cleavage which disrupts the DNA-binding part of LexA, leading to derepression of the SOS regulon and eventually DNA repair. The sequence is that of LexA repressor from Rhodospirillum rubrum (strain ATCC 11170 / ATH 1.1.1 / DSM 467 / LMG 4362 / NCIMB 8255 / S1).